Reading from the N-terminus, the 205-residue chain is Ribosomal RNA small subunit methyltransferase G (205 aa).

Residues glycine 66, phenylalanine 71, 119-120, and arginine 135 each bind S-adenosyl-L-methionine; that span reads IE.

The protein belongs to the methyltransferase superfamily. RNA methyltransferase RsmG family.

It localises to the cytoplasm. It carries out the reaction guanosine(527) in 16S rRNA + S-adenosyl-L-methionine = N(7)-methylguanosine(527) in 16S rRNA + S-adenosyl-L-homocysteine. Its function is as follows. Specifically methylates the N7 position of guanine in position 527 of 16S rRNA. The polypeptide is Ribosomal RNA small subunit methyltransferase G (Rhizobium etli (strain CIAT 652)).